The chain runs to 514 residues: Major facilitator superfamily domain-containing protein 4A (514 aa).

5 helical membrane-spanning segments follow: residues 19 to 39 (LTYWSVFFSFGLCIAFLGPTL), 53 to 73 (ISWVFFSQQLCLLLGSALGGV), 82 to 102 (LWALFTSSLAISLVFAVIPFC), 107 to 127 (VLASVMALAGLAMGCIDTVAN), and 139 to 159 (AVFLQVLHFFVGFGALLSPLI). N-linked (GlcNAc...) asparagine glycosylation is present at asparagine 177. The next 7 helical transmembrane spans lie at 221–241 (YAFWIMALINLPVPMAVLMLL), 307–327 (FFAIHITGALVLFMTDGLTGA), 347–367 (VAGYLPSLFWGFITLGRLLSI), 376–396 (ATMVFINVVGVVVTFLVLLIF), 400–420 (VVFLFVGTASLGLFLSSTFPS), 438–458 (VLVTGAGVGEMVLQMLVGSIF), and 466–486 (FLVCGVIFGCLAFTFYILLLF).

It belongs to the major facilitator superfamily.

Its subcellular location is the membrane. The protein is Major facilitator superfamily domain-containing protein 4A of Homo sapiens (Human).